We begin with the raw amino-acid sequence, 504 residues long: Glucose-6-phosphate isomerase (504 aa).

Catalysis depends on glutamate 333, which acts as the Proton donor. Residues histidine 364 and lysine 473 contribute to the active site.

It belongs to the GPI family.

The protein localises to the cytoplasm. It catalyses the reaction alpha-D-glucose 6-phosphate = beta-D-fructose 6-phosphate. The protein operates within carbohydrate biosynthesis; gluconeogenesis. It participates in carbohydrate degradation; glycolysis; D-glyceraldehyde 3-phosphate and glycerone phosphate from D-glucose: step 2/4. In terms of biological role, catalyzes the reversible isomerization of glucose-6-phosphate to fructose-6-phosphate. In Xanthomonas euvesicatoria pv. vesicatoria (strain 85-10) (Xanthomonas campestris pv. vesicatoria), this protein is Glucose-6-phosphate isomerase.